We begin with the raw amino-acid sequence, 598 residues long: DNA mismatch repair protein MutL (598 aa).

The protein belongs to the DNA mismatch repair MutL/HexB family.

Functionally, this protein is involved in the repair of mismatches in DNA. It is required for dam-dependent methyl-directed DNA mismatch repair. May act as a 'molecular matchmaker', a protein that promotes the formation of a stable complex between two or more DNA-binding proteins in an ATP-dependent manner without itself being part of a final effector complex. The protein is DNA mismatch repair protein MutL of Geotalea daltonii (strain DSM 22248 / JCM 15807 / FRC-32) (Geobacter daltonii).